Here is a 255-residue protein sequence, read N- to C-terminus: Protein SCO2 homolog, mitochondrial (255 aa).

The transit peptide at Met1 to Arg41 directs the protein to the mitochondrion. The Mitochondrial matrix segment spans residues Gln42–Arg49. The chain crosses the membrane as a helical span at residues Leu50–Ala67. Topologically, residues Arg68–Pro255 are mitochondrial intermembrane. In terms of domain architecture, Thioredoxin spans Trp74 to Ala248. Residues Cys122, Cys126, and His213 each contribute to the Cu cation site. Cys122 and Cys126 are disulfide-bonded.

It belongs to the SCO1/2 family. In terms of assembly, homodimer. Interacts with COA6. Found in a complex with TMEM177, COX20, COA6, MT-CO2/COX2, COX18 and SCO1. Interacts with TMEM177 in a COX20-dependent manner. Interacts with COX20 in a MT-CO2/COX2- and COX18-dependent manner. Interacts with COX16. Expressed in retina, retinal pigment epithelium, and sclera.

It localises to the mitochondrion inner membrane. Its function is as follows. Copper metallochaperone essential for the synthesis and maturation of cytochrome c oxidase subunit II (MT-CO2/COX2) by facilitating the incorporation of copper into the Cu(A) site of MT-CO2/COX2. Could also act as a thiol-disulfide oxidoreductase to regulate the redox state of the cysteines in SCO1 during maturation of MT-CO2/COX2. The protein is Protein SCO2 homolog, mitochondrial (Sco2) of Mus musculus (Mouse).